Here is a 454-residue protein sequence, read N- to C-terminus: Allantoinase (454 aa).

6 residues coordinate Zn(2+): His-59, His-61, Lys-150, His-190, His-246, and Asp-319. An N6-carboxylysine modification is found at Lys-150.

Belongs to the metallo-dependent hydrolases superfamily. Allantoinase family. Homotetramer. Zn(2+) serves as cofactor. Post-translationally, carboxylation allows a single lysine to coordinate two zinc ions.

It carries out the reaction (S)-allantoin + H2O = allantoate + H(+). Its pathway is nitrogen metabolism; (S)-allantoin degradation; allantoate from (S)-allantoin: step 1/1. Catalyzes the conversion of allantoin (5-ureidohydantoin) to allantoic acid by hydrolytic cleavage of the five-member hydantoin ring. This is Allantoinase from Bacillus licheniformis (strain ATCC 14580 / DSM 13 / JCM 2505 / CCUG 7422 / NBRC 12200 / NCIMB 9375 / NCTC 10341 / NRRL NRS-1264 / Gibson 46).